The chain runs to 119 residues: Protein TusC (119 aa).

This sequence belongs to the DsrF/TusC family. As to quaternary structure, heterohexamer, formed by a dimer of trimers. The hexameric TusBCD complex contains 2 copies each of TusB, TusC and TusD. The TusBCD complex interacts with TusE.

The protein resides in the cytoplasm. In terms of biological role, part of a sulfur-relay system required for 2-thiolation of 5-methylaminomethyl-2-thiouridine (mnm(5)s(2)U) at tRNA wobble positions. This Buchnera aphidicola subsp. Acyrthosiphon pisum (strain 5A) protein is Protein TusC.